The primary structure comprises 498 residues: Glycerol kinase (498 aa).

ADP is bound at residue Thr-12. ATP-binding residues include Thr-12, Thr-13, and Ser-14. Position 12 (Thr-12) interacts with sn-glycerol 3-phosphate. Position 16 (Arg-16) interacts with ADP. 4 residues coordinate sn-glycerol 3-phosphate: Arg-82, Glu-83, Tyr-134, and Asp-244. Glycerol contacts are provided by Arg-82, Glu-83, Tyr-134, Asp-244, and Gln-245. ADP-binding residues include Thr-266 and Gly-310. Residues Thr-266, Gly-310, Gln-314, and Gly-411 each contribute to the ATP site. The ADP site is built by Gly-411 and Asn-415.

It belongs to the FGGY kinase family.

It carries out the reaction glycerol + ATP = sn-glycerol 3-phosphate + ADP + H(+). The protein operates within polyol metabolism; glycerol degradation via glycerol kinase pathway; sn-glycerol 3-phosphate from glycerol: step 1/1. With respect to regulation, inhibited by fructose 1,6-bisphosphate (FBP). Its function is as follows. Key enzyme in the regulation of glycerol uptake and metabolism. Catalyzes the phosphorylation of glycerol to yield sn-glycerol 3-phosphate. The chain is Glycerol kinase from Chloroflexus aurantiacus (strain ATCC 29364 / DSM 637 / Y-400-fl).